Here is a 438-residue protein sequence, read N- to C-terminus: MSEDTVFTVAGQDWDDVVDAVKASSGGGGSEGGEERIVVNMGPQHPSTHGVLRLILEIEGETVTEARCGIGYLHTGIEKNLEYRTWTQGVTFVTRMDYLSPFFNETAYCLGVEKLLDITDEVPERASVIRVMLMELNRISSHLVALATGGMELGAVTAMLFGFRERELVLDVFEMITGLRMNHAYIRPGGLSQDLPEGAVEKVRELLALMPERLRDMENLLNDNRIWKGRTQGIGYLDLTGCMALGITGPMLRATGLPHDLRKSQPYCGYENYEFDVSTDTGCDAYGRYLIRVDEMKESLKIVEQCLDKLRPGPIMAEDKKIAWPADLTLGPDGLGNSPGHVREIMDSSMESLIHHFKLVTEGFRVPPGQVYVAVESPRGELGVHMVSDGGTRPFRVHFRDPSFTNLQSVAATCEGGMVADVIAAVASIDPVMGGVDR.

It belongs to the complex I 49 kDa subunit family. In terms of assembly, NDH-1 is composed of 14 different subunits. Subunits NuoB, C, D, E, F, and G constitute the peripheral sector of the complex.

It localises to the cell membrane. It carries out the reaction a quinone + NADH + 5 H(+)(in) = a quinol + NAD(+) + 4 H(+)(out). Its function is as follows. NDH-1 shuttles electrons from NADH, via FMN and iron-sulfur (Fe-S) centers, to quinones in the respiratory chain. The immediate electron acceptor for the enzyme in this species is believed to be a menaquinone. Couples the redox reaction to proton translocation (for every two electrons transferred, four hydrogen ions are translocated across the cytoplasmic membrane), and thus conserves the redox energy in a proton gradient. The protein is NADH-quinone oxidoreductase subunit D of Rhodococcus jostii (strain RHA1).